Here is a 621-residue protein sequence, read N- to C-terminus: Hemolysin ahh1 (621 aa).

An N-terminal signal peptide occupies residues 1–30 (MKNKKPRKFITQAPTLSLLALALLAGSVQA). Residues 491–610 (RPVNLQLGGF…QNVSVRTLTS (120 aa)) form the Ricin B-type lectin domain.

The protein belongs to the HlyA hemolysin family.

Functionally, bacterial hemolysins are exotoxins that attack blood cell membranes and cause cell rupture by mechanisms not clearly defined. This Aeromonas hydrophila subsp. hydrophila (strain ATCC 7966 / DSM 30187 / BCRC 13018 / CCUG 14551 / JCM 1027 / KCTC 2358 / NCIMB 9240 / NCTC 8049) protein is Hemolysin ahh1 (ahh1).